The primary structure comprises 122 residues: Large ribosomal subunit protein uL14 (122 aa).

The protein belongs to the universal ribosomal protein uL14 family. Part of the 50S ribosomal subunit. Forms a cluster with proteins L3 and L19. In the 70S ribosome, L14 and L19 interact and together make contacts with the 16S rRNA in bridges B5 and B8.

Functionally, binds to 23S rRNA. Forms part of two intersubunit bridges in the 70S ribosome. The sequence is that of Large ribosomal subunit protein uL14 from Acetivibrio thermocellus (strain ATCC 27405 / DSM 1237 / JCM 9322 / NBRC 103400 / NCIMB 10682 / NRRL B-4536 / VPI 7372) (Clostridium thermocellum).